We begin with the raw amino-acid sequence, 419 residues long: Phosphatidylinositol 5-phosphate 4-kinase type-2 gamma (419 aa).

Positions 46-418 (ASDPLISVFM…RFLEFVTNIF (373 aa)) constitute a PIPK domain. The span at 299-310 (QEEEEDLEEDHT) shows a compositional bias: acidic residues. The segment at 299-320 (QEEEEDLEEDHTENESSPHMNV) is disordered.

In terms of processing, phosphorylated, phosphorylation is induced by EGF.

Its subcellular location is the endoplasmic reticulum. It localises to the cytoplasm. The catalysed reaction is a 1,2-diacyl-sn-glycero-3-phospho-(1D-myo-inositol-5-phosphate) + ATP = a 1,2-diacyl-sn-glycero-3-phospho-(1D-myo-inositol-4,5-bisphosphate) + ADP + H(+). The enzyme catalyses 1,2-dihexadecanoyl-sn-glycero-3-phospho-(1D-myo-inositol-5-phosphate) + ATP = 1,2-dihexadecanoyl-sn-glycero-3-phospho-(1D-myo-inositol-4,5-bisphosphate) + ADP + H(+). It carries out the reaction 1,2-dihexadecanoyl-sn-glycero-3-phospho-(1D-myo-inositol-5-phosphate) + GTP = 1,2-dihexadecanoyl-sn-glycero-3-phospho-(1D-myo-inositol-4,5-bisphosphate) + GDP + H(+). In terms of biological role, phosphatidylinositol 5-phosphate 4-kinase with low enzymatic activity. May be a GTP sensor, has higher GTP-dependent kinase activity than ATP-dependent kinase activity. This Xenopus tropicalis (Western clawed frog) protein is Phosphatidylinositol 5-phosphate 4-kinase type-2 gamma (pip4k2c).